The following is a 476-amino-acid chain: Cysteine--tRNA ligase (476 aa).

Cysteine 28 contacts Zn(2+). The 'HIGH' region motif lies at 30-40 (PTVYDHTHLGH). Positions 208, 233, and 237 each coordinate Zn(2+). A 'KMSKS' region motif is present at residues 265–269 (KMSKS). Lysine 268 contributes to the ATP binding site.

Belongs to the class-I aminoacyl-tRNA synthetase family. The cofactor is Zn(2+).

It localises to the cytoplasm. The enzyme catalyses tRNA(Cys) + L-cysteine + ATP = L-cysteinyl-tRNA(Cys) + AMP + diphosphate. This is Cysteine--tRNA ligase from Methanococcus maripaludis (strain C6 / ATCC BAA-1332).